Reading from the N-terminus, the 95-residue chain is Co-chaperonin GroES (95 aa).

This sequence belongs to the GroES chaperonin family. As to quaternary structure, heptamer of 7 subunits arranged in a ring. Interacts with the chaperonin GroEL.

The protein resides in the cytoplasm. Functionally, together with the chaperonin GroEL, plays an essential role in assisting protein folding. The GroEL-GroES system forms a nano-cage that allows encapsulation of the non-native substrate proteins and provides a physical environment optimized to promote and accelerate protein folding. GroES binds to the apical surface of the GroEL ring, thereby capping the opening of the GroEL channel. The sequence is that of Co-chaperonin GroES from Cereibacter sphaeroides (strain KD131 / KCTC 12085) (Rhodobacter sphaeroides).